The following is a 1127-amino-acid chain: MSLTSAYQHKLAEKLTILNDRGQGVLIRMYNIKKTCSDPKSKPPFLLEKSMEPSLKYINKKFPNIDVRNSTQHLGPVHREKAEIIRFLTNYYQSFVDVMEFRDHVYELLNTIDACQCHFDINLNFDFTRSYLDLIVTYTSVILLLSRIEDRRILIGMYNCAHEMLHGHGDPSFARLGQMVLEYDHPLKKLTEEFGPHTKAVSGALLSLHFLFVRRNQGAEQWRSAQLLSLISNPPAMINPANSDTMACEYLSVEVMERWIIIGFLLCHGCLNSNSQCQKLWKLCLQGSLYITLIREDVLQVHKVTEDLFSSLKGYGKRVADIKESKEHVIANSGQFHCQRRQFLRMAVKELETVLADEPGLLGPKALFAFMALSFIRDEVTWLVRHTENVTKTKTPEDYADSSIAELLFLLEGIRSLVRRHIKVIQQYHLQYLARFDALVLSDIIQNLSVCPEEESIIMSSFVSILSSLNLKQVDNGEKFEFSGLRLDWFRLQAYTSVAKAPLHLHENPDLAKVMNLIVFHSRMLDSVEKLLVETSDLSTFCFHLRIFEKMFAMTLEESAMLRYAIAFPLICAHFVHCTHEMCPEEYPHLKNHGLHHCNSFLEELAKQTSNCVLEICAEQRNLSEQLLPKHCATTISKAKNKKTRKQRQTPRKGEPERDKPGAESHRKNRSIVTNMDKLHLNLTELALTMNHVYSFSVFEHTIFPSEYLSSHLEARLNRAIVWLAGYNATTQEIVRPSELLAGVKAYIGFIQSLAQFLGADASRVIRNALLQQTQPLDSCGEQTITTLYTNWYLESLLRQASSGTIILSPAMQAFVSLPREGEQNFSAEEFSDISEMRALAELLGPYGMKFLSENLMWHVTSQIVELKKLVVENMDILVQIRSNFSKPDLMASLLPQLTGAENVLKRMTIIGVILSFRAMAQEGLREVFSSHCPFLMGPIECLKEFVTPDTDIKVTLSIFELASAAGVGCDIDPALVAAIANLKADTSSPEEEYKVACLLLIFLAVSLPLLATDPSSFYSIEKDGYNNNIHCLTKAIIQVSAALFTLYNKNIETHLKEFLVVASVSLLQLGQETDKLKTRNRESISLLMRLVVEESSFLTLDMLESCFPYVLLRNAYREVSRAFHLN.

The segment at 638–670 (KAKNKKTRKQRQTPRKGEPERDKPGAESHRKNR) is disordered. The span at 639–651 (AKNKKTRKQRQTP) shows a compositional bias: basic residues. The segment covering 652 to 666 (RKGEPERDKPGAESH) has biased composition (basic and acidic residues). A helical transmembrane segment spans residues 996-1016 (VACLLLIFLAVSLPLLATDPS).

Belongs to the HEM-1/HEM-2 family. As to quaternary structure, in hematopoietic cells, component of the WAVE2 complex composed of ABI1, CYFIP1/SRA1, NCKAP1L/HEM1 and WASF2/WAVE2. Interacts with ARHGAP4, PIK3C3/VPS34 and PPP1R12A/MYPT1. Interacts with mammalian target of rapamycin complex 2 (mTORC2) components, including MTOR and RICTOR. In terms of tissue distribution, expressed only in cells of hematopoietic origin. Expressed in neutrophils (at protein level). Expressed in T-cells (at protein level).

Its subcellular location is the cell membrane. The protein localises to the cytoplasm. Functionally, essential hematopoietic-specific regulator of the actin cytoskeleton. Controls lymphocyte development, activation, proliferation and homeostasis, erythrocyte membrane stability, as well as phagocytosis and migration by neutrophils and macrophages. Component of the WAVE2 complex which signals downstream of RAC to stimulate F-actin polymerization. Required for stabilization and/or translation of the WAVE2 complex proteins in hematopoietic cells. Within the WAVE2 complex, enables the cortical actin network to restrain excessive degranulation and granule release by T-cells. Required for efficient T-lymphocyte and neutrophil migration. Exhibits complex cycles of activation and inhibition to generate waves of propagating the assembly with actin. Also involved in mechanisms WAVE-independent to regulate myosin and actin polymerization during neutrophil chemotaxis. In T-cells, required for proper mechanistic target of rapamycin complex 2 (mTORC2)-dependent AKT phosphorylation, cell proliferation and cytokine secretion, including that of IL2 and TNF. The protein is Nck-associated protein 1-like of Homo sapiens (Human).